The chain runs to 611 residues: Dihydroxy-acid dehydratase (611 aa).

Residue aspartate 81 coordinates Mg(2+). Residue cysteine 122 participates in [2Fe-2S] cluster binding. 2 residues coordinate Mg(2+): aspartate 123 and lysine 124. Lysine 124 carries the N6-carboxylysine modification. Residue cysteine 195 participates in [2Fe-2S] cluster binding. Residue glutamate 491 participates in Mg(2+) binding. The active-site Proton acceptor is serine 517.

This sequence belongs to the IlvD/Edd family. As to quaternary structure, homodimer. [2Fe-2S] cluster is required as a cofactor. Requires Mg(2+) as cofactor.

It catalyses the reaction (2R)-2,3-dihydroxy-3-methylbutanoate = 3-methyl-2-oxobutanoate + H2O. The enzyme catalyses (2R,3R)-2,3-dihydroxy-3-methylpentanoate = (S)-3-methyl-2-oxopentanoate + H2O. It functions in the pathway amino-acid biosynthesis; L-isoleucine biosynthesis; L-isoleucine from 2-oxobutanoate: step 3/4. Its pathway is amino-acid biosynthesis; L-valine biosynthesis; L-valine from pyruvate: step 3/4. Functionally, functions in the biosynthesis of branched-chain amino acids. Catalyzes the dehydration of (2R,3R)-2,3-dihydroxy-3-methylpentanoate (2,3-dihydroxy-3-methylvalerate) into 2-oxo-3-methylpentanoate (2-oxo-3-methylvalerate) and of (2R)-2,3-dihydroxy-3-methylbutanoate (2,3-dihydroxyisovalerate) into 2-oxo-3-methylbutanoate (2-oxoisovalerate), the penultimate precursor to L-isoleucine and L-valine, respectively. The protein is Dihydroxy-acid dehydratase of Histophilus somni (strain 2336) (Haemophilus somnus).